The chain runs to 530 residues: Glucose-6-phosphate isomerase (530 aa).

The active-site Proton donor is the glutamate 356. Active-site residues include histidine 387 and lysine 502.

Belongs to the GPI family.

It is found in the cytoplasm. It catalyses the reaction alpha-D-glucose 6-phosphate = beta-D-fructose 6-phosphate. Its pathway is carbohydrate biosynthesis; gluconeogenesis. The protein operates within carbohydrate degradation; glycolysis; D-glyceraldehyde 3-phosphate and glycerone phosphate from D-glucose: step 2/4. Functionally, catalyzes the reversible isomerization of glucose-6-phosphate to fructose-6-phosphate. The protein is Glucose-6-phosphate isomerase of Borreliella afzelii (strain PKo) (Borrelia afzelii).